The chain runs to 1324 residues: MFSNKNTDNVENDNNNALGSVIARINSQNIITKNKAPVISEDFETQDFDYPSFDDETPNYDRPQPTMVENFTLLPGEFVLMITKNVVNLSLTTTTHRIGTLYQTNYQMFFIDDSTRQLVSTIANGQLLQIKKLKGHVTVKYHDNTTPNNNNNNNNNNNNNNNNTNNNNNNNINKSNNSSTDQLNSFSLEKQPSQNENLNNNNNNNNNNNNGNNNINNNNLMNSLTQPSTSSRSRLLKSNSTPINLNESSTSTNSPTLSSTTTTTTTTSSTNGNCSTNTWYSNGVSEKALILEIRCKDFMITRYCLPFNEKGNEAFELMNKLICNNYQDSNQLFSMSYSPFKGVISPIDGWLFYDPIEEYTRQGLIGNSNGSDEWRLTKMNSKYELCSTYPQHFIIPFSISDYLLNKSSSHRNKNRFPVVTWRHKQTHATLSRSSQQTGKSRCEEDELLIQAIRKSKTILPNNNNQQQQPQQQQQTLYIIDIKSTSSSPTSSSSSHCEDISHYSQCQIESECLSNIHELRESQLKLFKVIRNWNEKKGWSEIQSTGWLDQLSKLLMVTKKILTHLHLEGFSCLIHCIDGWDRTCQLSSLVQLCADPYYRTIKGFIVLISKEWLSFGHKFMTRNGQSISSTSTTTTNSSSNGQLTSSSSNTSISSNATTTTTTTTSSKQTSPVFLQFIDVVWQLTKQFPTSFEFSDSFLSVILHHLNSNLFGTFLYDSEKERQQNNLPTETQSLWTLLLSAQKNSSLLNPLFNQQLSNETSSTTNLTATTSIPLTNSTTLDQQLQFKNNNDDGVLFPNPKGVQLWSDYFLKWRNPPKASRKSNTLIAHSLGVSYVNGDLIAFQKKKRSRRSKDGASGSSSGSSGSSSKHHHHHHHHHHHHHHRKSTDEKDSKEKSSKSSRSRTSSSSKRKSLSTSSNSITQPDIKINETITTTTTTPTNTTTLTNTSTTPRNTTTLTNASTTPTTTTTTTTTTTPTKDETINESVQVNNDKLKSPSGDDIKQEQDEMNQFTSQHPNNQMESSSEINQQNEQSQLEQQQEQQQQQEQQLQHEQQQIEQQQLQKQQQQQEQQEQQELEQQEQPNETITYSMESDSQSSISQNQNQLQQQQQQQTLLDPIDESSLLATTTTTTSSTAITSASKLEKELRKQEKEKRKLEKEKKQKERAERKLEKEKKRDQKEREQKEKELLEQQKPKADITVVLQSPSKKKAMSLTMPVRGTKSRISIFSSPLVPTLHPNLSDQNSQTNSSGDNSGNVNNSPNLTSTPISNLSNNNNNNNNSNENSNNNNNNNNNNNDNTSFSKRIFKTLRGTKTFNREPTPTVGTALN.

Residues 140-276 (KYHDNTTPNN…TSSTNGNCST (137 aa)) are disordered. The span at 144 to 180 (NTTPNNNNNNNNNNNNNNNNTNNNNNNNINKSNNSST) shows a compositional bias: low complexity. Over residues 181-194 (DQLNSFSLEKQPSQ) the composition is skewed to polar residues. The span at 195-222 (NENLNNNNNNNNNNNNGNNNINNNNLMN) shows a compositional bias: low complexity. The span at 223–247 (SLTQPSTSSRSRLLKSNSTPINLNE) shows a compositional bias: polar residues. The span at 248–276 (SSTSTNSPTLSSTTTTTTTTSSTNGNCST) shows a compositional bias: low complexity. One can recognise a Myotubularin phosphatase domain in the interval 349–807 (GWLFYDPIEE…KGVQLWSDYF (459 aa)). Residues 514–515 (NI), 575–581 (CIDGWDR), and arginine 621 contribute to the substrate site. The Phosphocysteine intermediate role is filled by cysteine 575. Disordered regions lie at residues 624-664 (QSIS…TTTS), 841-1043 (QKKK…QQQE), 1066-1110 (EQQE…QQQT), 1144-1213 (RKQE…LTMP), and 1232-1296 (LHPN…DNTS). 2 stretches are compositionally biased toward low complexity: residues 625 to 664 (SISS…TTTS) and 852 to 864 (GASG…SGSS). Basic residues predominate over residues 865 to 882 (SKHHHHHHHHHHHHHHRK). Basic and acidic residues predominate over residues 883 to 894 (STDEKDSKEKSS). Composition is skewed to low complexity over residues 899-914 (SRTS…STSS) and 927-973 (TITT…TTTP). Basic and acidic residues predominate over residues 988–1002 (DKLKSPSGDDIKQEQ). The segment covering 1005-1024 (MNQFTSQHPNNQMESSSEIN) has biased composition (polar residues). The stretch at 1020–1195 (SSEINQQNEQ…LEQQKPKADI (176 aa)) forms a coiled coil. Over residues 1025 to 1043 (QQNEQSQLEQQQEQQQQQE) the composition is skewed to low complexity. Residues 1079 to 1090 (PNETITYSMESD) show a composition bias toward polar residues. Over residues 1091-1109 (SQSSISQNQNQLQQQQQQQ) the composition is skewed to low complexity. Residues 1144-1193 (RKQEKEKRKLEKEKKQKERAERKLEKEKKRDQKEREQKEKELLEQQKPKA) show a composition bias toward basic and acidic residues. The span at 1234 to 1243 (PNLSDQNSQT) shows a compositional bias: polar residues. Composition is skewed to low complexity over residues 1244 to 1258 (NSSG…NSPN) and 1265 to 1294 (SNLS…NNDN).

The protein belongs to the protein-tyrosine phosphatase family. Non-receptor class myotubularin subfamily.

It is found in the cytoplasm. Its function is as follows. Phosphatase that acts on lipids with a phosphoinositol headgroup. The protein is Myotubularin-related protein DDB_G0290005 of Dictyostelium discoideum (Social amoeba).